Here is a 251-residue protein sequence, read N- to C-terminus: 3-deoxy-manno-octulosonate cytidylyltransferase (251 aa).

It belongs to the KdsB family.

It is found in the cytoplasm. The catalysed reaction is 3-deoxy-alpha-D-manno-oct-2-ulosonate + CTP = CMP-3-deoxy-beta-D-manno-octulosonate + diphosphate. It participates in nucleotide-sugar biosynthesis; CMP-3-deoxy-D-manno-octulosonate biosynthesis; CMP-3-deoxy-D-manno-octulosonate from 3-deoxy-D-manno-octulosonate and CTP: step 1/1. It functions in the pathway bacterial outer membrane biogenesis; lipopolysaccharide biosynthesis. Its function is as follows. Activates KDO (a required 8-carbon sugar) for incorporation into bacterial lipopolysaccharide in Gram-negative bacteria. The protein is 3-deoxy-manno-octulosonate cytidylyltransferase of Rhizobium leguminosarum bv. trifolii (strain WSM2304).